The following is a 149-amino-acid chain: 3-dehydroquinate dehydratase (149 aa).

Residue Tyr26 is the Proton acceptor of the active site. The substrate site is built by Asn77, His83, and Asp90. The active-site Proton donor is His103. Substrate is bound by residues 104 to 105 (LS) and Arg114.

Belongs to the type-II 3-dehydroquinase family. As to quaternary structure, homododecamer.

The enzyme catalyses 3-dehydroquinate = 3-dehydroshikimate + H2O. It functions in the pathway metabolic intermediate biosynthesis; chorismate biosynthesis; chorismate from D-erythrose 4-phosphate and phosphoenolpyruvate: step 3/7. Functionally, catalyzes a trans-dehydration via an enolate intermediate. The protein is 3-dehydroquinate dehydratase of Vibrio parahaemolyticus serotype O3:K6 (strain RIMD 2210633).